Reading from the N-terminus, the 161-residue chain is RNA pyrophosphohydrolase (161 aa).

The Nudix hydrolase domain occupies 6 to 149 (GYRPNVGIIL…KREVYRRAMR (144 aa)). Residues 38 to 59 (GGIKKDESPEEALFRELKEEVG) carry the Nudix box motif.

It belongs to the Nudix hydrolase family. RppH subfamily. It depends on a divalent metal cation as a cofactor.

Accelerates the degradation of transcripts by removing pyrophosphate from the 5'-end of triphosphorylated RNA, leading to a more labile monophosphorylated state that can stimulate subsequent ribonuclease cleavage. In Hahella chejuensis (strain KCTC 2396), this protein is RNA pyrophosphohydrolase.